A 485-amino-acid polypeptide reads, in one-letter code: Zinc finger protein 639 (485 aa).

Basic residues predominate over residues 1 to 14 (MNEYPKKRKRKTLH). Positions 1 to 20 (MNEYPKKRKRKTLHPSRYSD) are disordered. Ser-60 bears the Phosphoserine mark. A Glycyl lysine isopeptide (Lys-Gly) (interchain with G-Cter in SUMO2) cross-link involves residue Lys-76. The residue at position 88 (Ser-88) is a Phosphoserine. Glycyl lysine isopeptide (Lys-Gly) (interchain with G-Cter in SUMO2) cross-links involve residues Lys-177, Lys-181, and Lys-226. 8 consecutive C2H2-type zinc fingers follow at residues 204 to 227 (YKCE…ILKH), 233 to 255 (NVCR…AKLH), 260 to 283 (YICK…ADTH), 289 to 311 (YWCE…FQEH), 374 to 397 (FVCQ…AIEH), 403 to 425 (HVCD…LNSH), 431 to 454 (YLCQ…DFKH), and 460 to 482 (HKCS…LPVH). The tract at residues 371-455 (KNFFVCQVCG…LKIHLDFKHS (85 aa)) is interaction with CTNNA2.

The protein belongs to the krueppel C2H2-type zinc-finger protein family. As to quaternary structure, interacts with CTNNA2.

The protein localises to the nucleus. Its function is as follows. Binds DNA and may function as a transcriptional repressor. The polypeptide is Zinc finger protein 639 (ZNF639) (Homo sapiens (Human)).